The chain runs to 203 residues: Snake venom metalloproteinase fibrolase (203 aa).

Pyrrolidone carboxylic acid is present on Gln1. Positions 7–203 (RYVQLVIVAD…NNPQCILNKP (197 aa)) constitute a Peptidase M12B domain. Intrachain disulfides connect Cys118-Cys198, Cys158-Cys182, and Cys160-Cys165. His143 contacts Zn(2+). Residue Glu144 is part of the active site. Zn(2+) is bound by residues His147 and His153.

Belongs to the venom metalloproteinase (M12B) family. P-I subfamily. In terms of assembly, monomer. It depends on Zn(2+) as a cofactor. In terms of tissue distribution, expressed by the venom gland.

Its subcellular location is the secreted. It carries out the reaction Hydrolysis of 14-Ala-|-Leu-15 in insulin B chain and 413-Lys-|-Leu-414 in alpha-chain of fibrinogen.. Is inhibited by EDTA, o-phenanthroline and tetraethylenepentamine. In terms of biological role, snake venom zinc metalloprotease that exhibits direct fibrinolytic activity. The polypeptide is Snake venom metalloproteinase fibrolase (Agkistrodon contortrix contortrix (Southern copperhead)).